Here is a 235-residue protein sequence, read N- to C-terminus: Large ribosomal subunit protein uL1 (235 aa).

This sequence belongs to the universal ribosomal protein uL1 family. As to quaternary structure, part of the 50S ribosomal subunit.

Binds directly to 23S rRNA. The L1 stalk is quite mobile in the ribosome, and is involved in E site tRNA release. Functionally, protein L1 is also a translational repressor protein, it controls the translation of the L11 operon by binding to its mRNA. The polypeptide is Large ribosomal subunit protein uL1 (Prochlorococcus marinus (strain MIT 9515)).